Reading from the N-terminus, the 406-residue chain is Methyltransferase cfoD (406 aa).

Positions 270 and 312 each coordinate S-adenosyl-L-methionine. The active-site Proton acceptor is His-315.

It belongs to the class I-like SAM-binding methyltransferase superfamily. Cation-independent O-methyltransferase family.

Its pathway is secondary metabolite biosynthesis; flavonoid biosynthesis. Functionally, methyltransferase; part of the gene cluster that mediates the biosynthesis of chlorflavonin, a fungal flavonoid with acetolactate synthase inhibitory activity. Within the pathway, cfoD is responsible for the methylation at position C3-OH of flavonoid. The pathway begins with the PKS-NRPS hybrid synthetase cfoA that uses benzoic acid or p-hydroxybenzoic acid as a starter unit with four rounds of chain elongation using malonyl-CoA to form the chalcone skeleton. Then, a new type of chalcone isomerase, cfoK, catalyzes the conversion of the chalcone into a flavanone by a histidine-mediated oxa-Michael addition mechanism. The desaturation of flavanone to flavone is catalyzed by a new type of flavone synthase, the flavin mononucleotide (FMN)-dependent oxidoreductase cfoJ. Monooxygenases cfoF, cfoG, and P450 cfoH are responsible for the hydroxylation of the flavonoid skeleton at sites C3, C8, and C2', respectively. Like cfoF, the dehydratase cfoI also plays a role in the hydroxylation of position C3. Methyltransferases cfoB, cfoC, and cfoD then catalyze the methylation of C7-OH, C8-OH, and C3-OH, respectively. Finally, the monooxygenase cfoE is responsible for the chlorination of flavonoid at position C3'. The protein is Methyltransferase cfoD of Aspergillus candidus.